We begin with the raw amino-acid sequence, 345 residues long: Alpha-N-acetylneuraminide alpha-2,8-sialyltransferase (345 aa).

The Cytoplasmic segment spans residues 1 to 15; that stretch reads MKLQGSRMWLCPRTR. Residues 16–36 traverse the membrane as a helical; Signal-anchor for type II membrane protein segment; that stretch reads LPVGASALGFLILCWLYVFPG. Topologically, residues 37–345 are lumenal; the sequence is YRLPGHKEMV…KKDVSSQKPH (309 aa). N-linked (GlcNAc...) asparagine glycosylation is found at asparagine 59 and asparagine 107. 2 disulfide bridges follow: cysteine 126/cysteine 275 and cysteine 140/cysteine 335. Residues asparagine 131 and asparagine 154 each contribute to the CMP-N-acetyl-beta-neuraminate site. Substrate-binding positions include asparagine 154 and 176 to 178; that span reads NPS. A glycan (N-linked (GlcNAc...) asparagine) is linked at asparagine 233. CMP-N-acetyl-beta-neuraminate-binding residues include serine 262, threonine 263, glycine 264, tryptophan 284, and histidine 298. 262 to 264 provides a ligand contact to substrate; it reads STG. Residue histidine 310 is the Proton donor/acceptor of the active site.

This sequence belongs to the glycosyltransferase 29 family.

Its subcellular location is the golgi apparatus membrane. It catalyses the reaction an N-acetyl-alpha-neuraminyl-(2-&gt;3)-beta-D-galactosyl derivative + CMP-N-acetyl-beta-neuraminate = an N-acetyl-alpha-neuraminyl-(2-&gt;8)-N-acetyl-alpha-neuraminyl-(2-&gt;3)-beta-D-galactosyl derivative + CMP + H(+). The enzyme catalyses a ganglioside GM3 (d18:1(4E)) + CMP-N-acetyl-beta-neuraminate = a ganglioside GD3 (d18:1(4E)) + CMP + H(+). The catalysed reaction is a ganglioside GD3 (d18:1(4E)) + CMP-N-acetyl-beta-neuraminate = a ganglioside GT3 (d18:1(4E)) + CMP + H(+). It carries out the reaction a ganglioside GD1a (d18:1(4E)) + CMP-N-acetyl-beta-neuraminate = a ganglioside GT1a (d18:1(4E)) + CMP + H(+). It catalyses the reaction a ganglioside GT1b (d18:1(4E)) + CMP-N-acetyl-beta-neuraminate = a ganglioside GQ1b (d18:1(4E)) + CMP + H(+). The enzyme catalyses a ganglioside GM1b (d18:1(4E)) + CMP-N-acetyl-beta-neuraminate = a ganglioside GD1c (d18:1(4E)) + CMP + H(+). The catalysed reaction is a ganglioside GD3 + CMP-N-acetyl-beta-neuraminate = a ganglioside GT3 + CMP + H(+). It carries out the reaction [alpha-N-acetylneuraminyl-(2-&gt;8)](n)-alpha-N-acetylneuraminyl-(2-&gt;8)-alpha-N-acetylneuraminyl-(2-&gt;3)-beta-D-galactosyl-(1-&gt;4)-beta-D-glucosyl-(1&lt;-&gt;1)-ceramide + CMP-N-acetyl-beta-neuraminate = [alpha-N-acetylneuraminyl-(2-&gt;8)](n+1)-alpha-N-acetylneuraminyl-(2-&gt;8)-alpha-N-acetylneuraminyl-(2-&gt;3)-beta-D-galactosyl-(1-&gt;4)-beta-D-glucosyl-(1&lt;-&gt;1)-ceramide + CMP + H(+). The protein operates within protein modification; protein glycosylation. Its pathway is lipid metabolism; sphingolipid metabolism. Catalyzes the addition of sialic acid in alpha 2,8-linkage to the sialic acid moiety of the ganglioside GM3 to form ganglioside GD3; gangliosides are a subfamily of complex glycosphingolipds that contain one or more residues of sialic acid. Glycosphingolipids are required for convergence extension movements during early development. Can catalyze the addition of a second alpha-2,8- sialic acid to GD3 to form GT3. Can use GM1b, GD1a and GT1b as acceptor substrates to synthesize GD1c, GT1a and GQ1b respectively. In Xenopus tropicalis (Western clawed frog), this protein is Alpha-N-acetylneuraminide alpha-2,8-sialyltransferase.